Reading from the N-terminus, the 301-residue chain is NADH-cytochrome b5 reductase 3 (301 aa).

Gly2 carries the N-myristoyl glycine lipid modification. Residues 40 to 152 (DIKYPLRLID…RGPNGLLVYQ (113 aa)) form the FAD-binding FR-type domain. Lys42 is modified (N6-acetyllysine). At Tyr43 the chain carries Phosphotyrosine. Residue Lys50 is modified to N6-acetyllysine. 6 residues coordinate FAD: Arg92, Pro93, Tyr94, Val109, Lys111, and Phe114. An N6-acetyllysine modification is found at Lys120. FAD-binding residues include Lys126, Met127, Ser128, and Thr185.

This sequence belongs to the flavoprotein pyridine nucleotide cytochrome reductase family. In terms of assembly, component of a complex composed of cytochrome b5, NADH-cytochrome b5 reductase (CYB5R3) and MTARC2. Interacts with MTLN; the interaction is required to maintain cellular lipid composition and leads to stimulation of mitochondrial respiratory complex I activity. FAD serves as cofactor. In terms of processing, myristoylated. In terms of tissue distribution, ubiquitously expressed. Expressed only in erythroid tissues, reticulocytes and liver.

It localises to the endoplasmic reticulum membrane. The protein localises to the mitochondrion outer membrane. Its subcellular location is the cytoplasm. The catalysed reaction is 2 Fe(III)-[cytochrome b5] + NADH = 2 Fe(II)-[cytochrome b5] + NAD(+) + H(+). Its function is as follows. Catalyzes the reduction of two molecules of cytochrome b5 using NADH as the electron donor. This chain is NADH-cytochrome b5 reductase 3, found in Rattus norvegicus (Rat).